Consider the following 367-residue polypeptide: Peptide chain release factor 2 (367 aa).

Gln-254 is modified (N5-methylglutamine).

This sequence belongs to the prokaryotic/mitochondrial release factor family. In terms of processing, methylated by PrmC. Methylation increases the termination efficiency of RF2.

Its subcellular location is the cytoplasm. Peptide chain release factor 2 directs the termination of translation in response to the peptide chain termination codons UGA and UAA. The protein is Peptide chain release factor 2 of Neisseria meningitidis serogroup C / serotype 2a (strain ATCC 700532 / DSM 15464 / FAM18).